The primary structure comprises 205 residues: Small ribosomal subunit protein uS4 (205 aa).

Positions 95 to 158 (SRLDNIVYRM…TKSPLVKNFI (64 aa)) constitute an S4 RNA-binding domain.

It belongs to the universal ribosomal protein uS4 family. Part of the 30S ribosomal subunit. Contacts protein S5. The interaction surface between S4 and S5 is involved in control of translational fidelity.

Its function is as follows. One of the primary rRNA binding proteins, it binds directly to 16S rRNA where it nucleates assembly of the body of the 30S subunit. Functionally, with S5 and S12 plays an important role in translational accuracy. This is Small ribosomal subunit protein uS4 from Mycoplasma genitalium (strain ATCC 33530 / DSM 19775 / NCTC 10195 / G37) (Mycoplasmoides genitalium).